The chain runs to 388 residues: Putative O-antigen polymerase (388 aa).

The next 9 membrane-spanning stretches (helical) occupy residues 23-43, 57-77, 97-117, 143-163, 180-200, 215-235, 312-332, 338-358, and 361-381; these read IFYP…GYEI, LIFL…TESV, VHNV…MRLS, NFSA…IWSK, IVFI…MVII, VYLI…LRGL, ISAE…GVLW, YISV…IFYH, and FMTN…FSQF.

The protein localises to the cell inner membrane. May function in vitro as a polymerase that catalyzes the polymerization of the O-antigen repeat units on the periplasmic face of the inner membrane, leading to the formation of the lipid-linked O-antigen molecule. However, E.coli K12 strains do not normally produce the O-antigen in vivo due to mutations in the rfb gene cluster. K12 strains are phenotypically rough, their lipopolysaccharide having a complete core structure, but no O-antigen. The sequence is that of Putative O-antigen polymerase from Escherichia coli (strain K12).